A 445-amino-acid chain; its full sequence is Phosphoglucosamine mutase (445 aa).

Residue Ser-102 is the Phosphoserine intermediate of the active site. Mg(2+) contacts are provided by Ser-102, Asp-241, Asp-243, and Asp-245. Ser-102 bears the Phosphoserine mark.

This sequence belongs to the phosphohexose mutase family. Mg(2+) is required as a cofactor. Post-translationally, activated by phosphorylation.

It carries out the reaction alpha-D-glucosamine 1-phosphate = D-glucosamine 6-phosphate. In terms of biological role, catalyzes the conversion of glucosamine-6-phosphate to glucosamine-1-phosphate. This Shewanella baltica (strain OS155 / ATCC BAA-1091) protein is Phosphoglucosamine mutase.